A 128-amino-acid chain; its full sequence is Large ribosomal subunit protein bL21 (128 aa).

Residues Gly-104–Glu-128 form a disordered region. Residues Glu-119 to Glu-128 show a composition bias toward low complexity.

It belongs to the bacterial ribosomal protein bL21 family. Part of the 50S ribosomal subunit. Contacts protein L20.

In terms of biological role, this protein binds to 23S rRNA in the presence of protein L20. This Rhodopseudomonas palustris (strain HaA2) protein is Large ribosomal subunit protein bL21.